The sequence spans 261 residues: Thioesterase TesA (261 aa).

Residues 1–24 (MLARHGPRYGGSVNGHSDDSSGDA) form a disordered region. Catalysis depends on residues Ser104, Asp208, and His236.

It belongs to the thioesterase family.

The catalysed reaction is a fatty acyl-CoA + H2O = a fatty acid + CoA + H(+). Involved in the synthesis of both phthiocerol dimycocerosates (PDIMs) and phenolic glycolipids (PGLs), which are structurally related lipids non-covalently bound to the outer cell wall layer of M.tuberculosis and are important virulence factors. This Mycobacterium bovis (strain ATCC BAA-935 / AF2122/97) protein is Thioesterase TesA (tesA).